Consider the following 96-residue polypeptide: Aspartyl/glutamyl-tRNA(Asn/Gln) amidotransferase subunit C (96 aa).

The protein belongs to the GatC family. As to quaternary structure, heterotrimer of A, B and C subunits.

The enzyme catalyses L-glutamyl-tRNA(Gln) + L-glutamine + ATP + H2O = L-glutaminyl-tRNA(Gln) + L-glutamate + ADP + phosphate + H(+). The catalysed reaction is L-aspartyl-tRNA(Asn) + L-glutamine + ATP + H2O = L-asparaginyl-tRNA(Asn) + L-glutamate + ADP + phosphate + 2 H(+). Functionally, allows the formation of correctly charged Asn-tRNA(Asn) or Gln-tRNA(Gln) through the transamidation of misacylated Asp-tRNA(Asn) or Glu-tRNA(Gln) in organisms which lack either or both of asparaginyl-tRNA or glutaminyl-tRNA synthetases. The reaction takes place in the presence of glutamine and ATP through an activated phospho-Asp-tRNA(Asn) or phospho-Glu-tRNA(Gln). The polypeptide is Aspartyl/glutamyl-tRNA(Asn/Gln) amidotransferase subunit C (Bacillus velezensis (strain DSM 23117 / BGSC 10A6 / LMG 26770 / FZB42) (Bacillus amyloliquefaciens subsp. plantarum)).